Reading from the N-terminus, the 269-residue chain is MSSLQIILLLIIAAITGIASVLDEGQTHRPLVACTLVGLVLGDLKTGIILGGTLELMALGWMNVGLAMAPDTAIASVISTILVITADQGIGEGIAVAVALAAAGQALTIFVRTITVFFIHRADQYAKAGNIKGIEIMHITAMVFQALRVMIPTLIVALISVSAVQAFLGNIPDVITKGLQIGGGIIVVVGYAMVINMMNIPYLKPFFYIGFLLAAFTDFNLVGFGALGLCLALLYQQVMQKQSAHGAVAAASDSGSVAVYDDDDDDLDA.

In terms of domain architecture, PTS EIIC type-4 spans 1 to 234; the sequence is MSSLQIILLL…GALGLCLALL (234 aa). Helical transmembrane passes span 2–22, 35–54, 64–86, 90–110, 149–169, 181–201, and 206–226; these read SSLQIILLLIIAAITGIASVL, TLVGLVLGDLKTGIILGGTL, VGLAMAPDTAIASVISTILVITA, IGEGIAVAVALAAAGQALTIF, VMIPTLIVALISVSAVQAFLG, IGGGIIVVVGYAMVINMMNIP, and FFYIGFLLAAFTDFNLVGFGA.

The protein localises to the cell membrane. Its function is as follows. The phosphoenolpyruvate-dependent sugar phosphotransferase system (PTS), a major carbohydrate active -transport system, catalyzes the phosphorylation of incoming sugar substrates concomitant with their translocation across the cell membrane. This system is involved in fructose transport. The chain is Fructose permease IIC component (levF) from Bacillus subtilis (strain 168).